The following is an 86-amino-acid chain: UPF0125 protein bbp_234 (86 aa).

This sequence belongs to the UPF0125 (RnfH) family.

This Buchnera aphidicola subsp. Baizongia pistaciae (strain Bp) protein is UPF0125 protein bbp_234.